The sequence spans 762 residues: Homeobox-leucine zipper protein MERISTEM L1 (762 aa).

The interval Met13–Arg72 is disordered. The segment covering Ser30 to Ser39 has biased composition (basic and acidic residues). The span at Pro60–Gln71 shows a compositional bias: basic residues. Positions Lys62 to His121 form a DNA-binding region, homeobox. Residues Phe110 to Tyr192 adopt a coiled-coil conformation. In terms of domain architecture, START spans Ser253 to Ser484.

The protein belongs to the HD-ZIP homeobox family. Class IV subfamily. Interacts with GAI/RGA2, RGA/RGA1/GRS, RGL2/SCL19 and PDF2. Interacts with AIL7/PLT7, ANT, BBM and AIL1.

The protein resides in the nucleus. Its function is as follows. Probable transcription factor involved in cell specification and pattern formation during embryogenesis. Binds to the L1 box DNA sequence 5'-TAAATG[CT]A-3'. Plays a role in maintaining the identity of L1 cells, possibly by interacting with their L1 box or other target-gene promoters; binds to the LIP1 gene promoter and stimulates its expression upon imbibition. Acts as a positive regulator of gibberellins (GAs)-regulated epidermal gene expression (e.g. LIP1, LIP2, LTP1, FDH and PDF1). Functionally redundant to PDF2. Seems to promote cell differentiation. In Arabidopsis thaliana (Mouse-ear cress), this protein is Homeobox-leucine zipper protein MERISTEM L1.